The following is a 343-amino-acid chain: S-adenosylmethionine:tRNA ribosyltransferase-isomerase (343 aa).

It belongs to the QueA family. In terms of assembly, monomer.

The protein resides in the cytoplasm. The enzyme catalyses 7-aminomethyl-7-carbaguanosine(34) in tRNA + S-adenosyl-L-methionine = epoxyqueuosine(34) in tRNA + adenine + L-methionine + 2 H(+). The protein operates within tRNA modification; tRNA-queuosine biosynthesis. Its function is as follows. Transfers and isomerizes the ribose moiety from AdoMet to the 7-aminomethyl group of 7-deazaguanine (preQ1-tRNA) to give epoxyqueuosine (oQ-tRNA). The protein is S-adenosylmethionine:tRNA ribosyltransferase-isomerase of Dehalococcoides mccartyi (strain CBDB1).